We begin with the raw amino-acid sequence, 117 residues long: Immunoglobulin kappa variable 1D-17 (117 aa).

Positions 1–22 (MDMRVPAQLLGLLLLWFPGARC) are cleaved as a signal peptide. Residues 23–45 (NIQMTQSPSAMSASVGDRVTITC) are framework-1. In terms of domain architecture, Ig-like spans 23–117 (NIQMTQSPSA…YYCLQHNSYP (95 aa)). The cysteines at positions 45 and 110 are disulfide-linked. The tract at residues 46 to 56 (RARQGISNYLA) is complementarity-determining-1. Residues 57 to 71 (WFQQKPGKVPKHLIY) are framework-2. The complementarity-determining-2 stretch occupies residues 72 to 78 (AASSLQS). A framework-3 region spans residues 79 to 110 (GVPSRFSGSGSGTEFTLTISSLQPEDFATYYC). Residues 111–117 (LQHNSYP) are complementarity-determining-3.

In terms of assembly, immunoglobulins are composed of two identical heavy chains and two identical light chains; disulfide-linked.

The protein localises to the secreted. Its subcellular location is the cell membrane. In terms of biological role, v region of the variable domain of immunoglobulin light chains that participates in the antigen recognition. Immunoglobulins, also known as antibodies, are membrane-bound or secreted glycoproteins produced by B lymphocytes. In the recognition phase of humoral immunity, the membrane-bound immunoglobulins serve as receptors which, upon binding of a specific antigen, trigger the clonal expansion and differentiation of B lymphocytes into immunoglobulins-secreting plasma cells. Secreted immunoglobulins mediate the effector phase of humoral immunity, which results in the elimination of bound antigens. The antigen binding site is formed by the variable domain of one heavy chain, together with that of its associated light chain. Thus, each immunoglobulin has two antigen binding sites with remarkable affinity for a particular antigen. The variable domains are assembled by a process called V-(D)-J rearrangement and can then be subjected to somatic hypermutations which, after exposure to antigen and selection, allow affinity maturation for a particular antigen. The polypeptide is Immunoglobulin kappa variable 1D-17 (Homo sapiens (Human)).